A 186-amino-acid chain; its full sequence is Peptidyl-tRNA hydrolase (186 aa).

TRNA is bound at residue Tyr-14. His-19 (proton acceptor) is an active-site residue. Residues Tyr-64, Asn-66, and Asn-112 each coordinate tRNA.

The protein belongs to the PTH family. In terms of assembly, monomer.

It is found in the cytoplasm. It catalyses the reaction an N-acyl-L-alpha-aminoacyl-tRNA + H2O = an N-acyl-L-amino acid + a tRNA + H(+). In terms of biological role, hydrolyzes ribosome-free peptidyl-tRNAs (with 1 or more amino acids incorporated), which drop off the ribosome during protein synthesis, or as a result of ribosome stalling. Its function is as follows. Catalyzes the release of premature peptidyl moieties from peptidyl-tRNA molecules trapped in stalled 50S ribosomal subunits, and thus maintains levels of free tRNAs and 50S ribosomes. This chain is Peptidyl-tRNA hydrolase, found in Lachnospira eligens (strain ATCC 27750 / DSM 3376 / VPI C15-48 / C15-B4) (Eubacterium eligens).